The chain runs to 210 residues: Helix-loop-helix protein 26 (210 aa).

Residues 1–15 are compositionally biased toward low complexity; that stretch reads MSSSPTSSSSGSPSS. The tract at residues 1–33 is disordered; that stretch reads MSSSPTSSSSGSPSSHGHRSETEKQRRDDTNDL. A bHLH domain is found at 14–65; the sequence is SSHGHRSETEKQRRDDTNDLLNEFKKIVQKSESEKLSKEEVLFRIVKLLSGI. Residues 18 to 33 show a composition bias toward basic and acidic residues; the sequence is HRSETEKQRRDDTNDL.

As to quaternary structure, homodimer; binds to DNA as a homodimer. As to expression, expressed in intestinal cells (at protein level).

It localises to the nucleus. In terms of biological role, as a homodimer binds DNA via the E-box sequence 5'-CACGTG-3'. Represses lag-2 transcription during embryogenesis via Notch signaling, in an unc-37-dependent manner. Also represses tbx-37 independent of Notch signaling. In the intestine, plays a role in probiotic-mediated protection against infections by pathogens such as S.enterica. This is most likely by positively regulating the expression of genes such as bar-1 upon exposure to probiotic bacteria such as the E.faecium. The chain is Helix-loop-helix protein 26 from Caenorhabditis elegans.